The chain runs to 546 residues: uncharacterized protein (546 aa).

The SLH domain occupies 52–123 (SVAELRDVQP…NTIEQLLQEN (72 aa)).

The protein belongs to the OprB family.

This is an uncharacterized protein from Synechocystis sp. (strain ATCC 27184 / PCC 6803 / Kazusa).